Reading from the N-terminus, the 359-residue chain is Trans-enoyl reductase FSL5 (359 aa).

47 to 50 provides a ligand contact to NADP(+); the sequence is IDGK. 134–141 contacts substrate; sequence SGVGTIGL. Residues 169 to 172, 192 to 195, Y210, and 257 to 258 contribute to the NADP(+) site; these read STAT, SPHN, and LE. 277 to 281 is a substrate binding site; that stretch reads GPTLL. Residue 346-347 participates in NADP(+) binding; that stretch reads VS.

This sequence belongs to the zinc-containing alcohol dehydrogenase family. Monomer.

It participates in secondary metabolite biosynthesis. Trans-enoyl reductase; part of the gene cluster that mediates the biosynthesis of fusarielins F, G and H, decaketide compounds with 5 methylations and a decaline core that act as mycoestrogens as they stimulate growth of MCF-7 breast cancer cells. The initial compound in the pathway is produced by the reducing polyketide synthase FSL1. FSL1 lacks an active enoyl reductase (ER) domain and biosynthesis of fusarielins relies on the trans-acting enoyl reductase FSL5, before it is released through hydrolysis catalyzed by the thioesterase FSL2. Fusarielins F, G, and H have a C11=C12 cis double bond and is fully reduced between C10 and C11 and between C12 and C13. FSL3 can be involved in the formation of the C11=C12 cis double bond by moving a hypothetical C10=C11 or C12=C13 trans double bond to form prefusarielin. Prefusarielin is oxygenated at C15 and C16 by the cytochrome P450 monooxygenase FSL4, resulting in fusarielin F, which subsequently is epoxidized into fusarielin G by the same enzyme. The final step in the pathway is a reduction of the carboxylic acid moiety to yield fusarielin H via a still undetermined mechanism. This is Trans-enoyl reductase FSL5 from Gibberella zeae (strain ATCC MYA-4620 / CBS 123657 / FGSC 9075 / NRRL 31084 / PH-1) (Wheat head blight fungus).